A 1503-amino-acid polypeptide reads, in one-letter code: Chromosome partition protein MukB (1503 aa).

The span at 1–19 (MMNTNELFDQTAVNSSQDK) shows a compositional bias: polar residues. A disordered region spans residues 1–21 (MMNTNELFDQTAVNSSQDKPL). Position 65 to 72 (65 to 72 (GGNGAGKS)) interacts with ATP. Coiled coils occupy residues 370 to 495 (MNAL…QRLS), 536 to 616 (DQKM…HRQQ), 662 to 697 (MQEMLRKEREATLERDELARTEAALASQISQLSQAD), 865 to 1173 (EMLM…SAEE), and 1238 to 1293 (DAIE…LQNI). The tract at residues 696–813 (ADGAEDIRLN…EVPLFGRAAR (118 aa)) is flexible hinge.

The protein belongs to the SMC family. MukB subfamily. In terms of assembly, homodimerization via its hinge domain. Binds to DNA via its C-terminal region. Interacts, and probably forms a ternary complex, with MukE and MukF via its C-terminal region. The complex formation is stimulated by calcium or magnesium. Interacts with tubulin-related protein FtsZ.

It localises to the cytoplasm. Its subcellular location is the nucleoid. In terms of biological role, plays a central role in chromosome condensation, segregation and cell cycle progression. Functions as a homodimer, which is essential for chromosome partition. Involved in negative DNA supercoiling in vivo, and by this means organize and compact chromosomes. May achieve or facilitate chromosome segregation by condensation DNA from both sides of a centrally located replisome during cell division. This is Chromosome partition protein MukB from Haemophilus ducreyi (strain 35000HP / ATCC 700724).